The sequence spans 196 residues: Ribosome maturation factor RimP (196 aa).

The disordered stretch occupies residues 164–196; the sequence is LAPQKPNKPGPKKPGHDKKKPSNEPAAGKPRAE. Residues 173-182 are compositionally biased toward basic residues; that stretch reads GPKKPGHDKK.

Belongs to the RimP family.

Its subcellular location is the cytoplasm. Functionally, required for maturation of 30S ribosomal subunits. The sequence is that of Ribosome maturation factor RimP from Xanthomonas campestris pv. campestris (strain 8004).